The chain runs to 394 residues: Immune-associated nucleotide-binding protein 12 (394 aa).

The region spanning 45 to 251 (KPARTLLLVG…YMADLSHEIR (207 aa)) is the AIG1-type G domain. Residues 54-61 (GRSGNGKS) form a G1 region. GTP-binding positions include 54-62 (GRSGNGKSA) and Ser-75. Residues 81-85 (GVTTA) form a G2 region. The G3 stretch occupies residues 103-106 (DTPG). Residues 173 to 176 (TNED) form a G4 region. The G5 stretch occupies residues 210–212 (RNR). Asn-211 lines the GTP pocket. Positions 289–387 (NQQLRQMMER…KQMATDLQKS (99 aa)) form a coiled coil.

Belongs to the TRAFAC class TrmE-Era-EngA-EngB-Septin-like GTPase superfamily. AIG1/Toc34/Toc159-like paraseptin GTPase family. IAN subfamily.

The sequence is that of Immune-associated nucleotide-binding protein 12 from Arabidopsis thaliana (Mouse-ear cress).